A 207-amino-acid chain; its full sequence is Thiamine-phosphate synthase (207 aa).

Residues 37–41 (QLREK) and asparagine 69 contribute to the 4-amino-2-methyl-5-(diphosphooxymethyl)pyrimidine site. Positions 70 and 89 each coordinate Mg(2+). Serine 108 provides a ligand contact to 4-amino-2-methyl-5-(diphosphooxymethyl)pyrimidine. 134–136 (TGS) contacts 2-[(2R,5Z)-2-carboxy-4-methylthiazol-5(2H)-ylidene]ethyl phosphate. Lysine 137 serves as a coordination point for 4-amino-2-methyl-5-(diphosphooxymethyl)pyrimidine. Residues glycine 165 and 185-186 (IS) each bind 2-[(2R,5Z)-2-carboxy-4-methylthiazol-5(2H)-ylidene]ethyl phosphate.

It belongs to the thiamine-phosphate synthase family. Requires Mg(2+) as cofactor.

The enzyme catalyses 2-[(2R,5Z)-2-carboxy-4-methylthiazol-5(2H)-ylidene]ethyl phosphate + 4-amino-2-methyl-5-(diphosphooxymethyl)pyrimidine + 2 H(+) = thiamine phosphate + CO2 + diphosphate. It carries out the reaction 2-(2-carboxy-4-methylthiazol-5-yl)ethyl phosphate + 4-amino-2-methyl-5-(diphosphooxymethyl)pyrimidine + 2 H(+) = thiamine phosphate + CO2 + diphosphate. It catalyses the reaction 4-methyl-5-(2-phosphooxyethyl)-thiazole + 4-amino-2-methyl-5-(diphosphooxymethyl)pyrimidine + H(+) = thiamine phosphate + diphosphate. The protein operates within cofactor biosynthesis; thiamine diphosphate biosynthesis; thiamine phosphate from 4-amino-2-methyl-5-diphosphomethylpyrimidine and 4-methyl-5-(2-phosphoethyl)-thiazole: step 1/1. Condenses 4-methyl-5-(beta-hydroxyethyl)thiazole monophosphate (THZ-P) and 2-methyl-4-amino-5-hydroxymethyl pyrimidine pyrophosphate (HMP-PP) to form thiamine monophosphate (TMP). This chain is Thiamine-phosphate synthase, found in Desulfitobacterium hafniense (strain DSM 10664 / DCB-2).